The following is a 254-amino-acid chain: E3 ubiquitin-protein ligase NEURL3 (254 aa).

Residues 17-174 enclose the NHR domain; the sequence is ALSFHGNATG…TTKAIELLDP (158 aa). An RING-type zinc finger spans residues 197-236; it reads CVICFHNTANTRLMPCGHSHFCGSCAWHIFKDTARCPICR.

In terms of tissue distribution, expressed in alveolar epithelial type II cells.

It is found in the cytoplasm. It carries out the reaction S-ubiquitinyl-[E2 ubiquitin-conjugating enzyme]-L-cysteine + [acceptor protein]-L-lysine = [E2 ubiquitin-conjugating enzyme]-L-cysteine + N(6)-ubiquitinyl-[acceptor protein]-L-lysine.. It functions in the pathway protein modification; protein ubiquitination. Functionally, E3 ubiquitin-protein ligase that plays a role in various biological processes such as lung development or innate immunity. Seems to utilize UBE2E1. Promotes innate antiviral response by catalyzing 'Lys-63'-linked ubiquitination of IRF7. Plays an essential role in TLR4-mediated activation of MAPK pathways by promoting 'Lys-48'-linked polyubiquitination of the phosphatase DUSP1/MKP1. The protein is E3 ubiquitin-protein ligase NEURL3 (Neurl3) of Mus musculus (Mouse).